A 47-amino-acid polypeptide reads, in one-letter code: Putative beta-neurotoxin (47 aa).

The 47-residue stretch at 1 to 47 (KEGYMGSDGCKMSCVINDQFCDTECQAKLKGSTGYCYFXGLACYXXG) folds into the LCN-type CS-alpha/beta domain. 2 disulfides stabilise this stretch: Cys14–Cys36 and Cys21–Cys43.

As to expression, expressed by the venom gland.

It is found in the secreted. Functionally, causes transient paralysis of the rear legs of and spasms in insects (A.domestica). The sequence is that of Putative beta-neurotoxin from Rhopalurus junceus (Caribbean blue scorpion).